Reading from the N-terminus, the 177-residue chain is Large ribosomal subunit protein uL6 (177 aa).

This sequence belongs to the universal ribosomal protein uL6 family. Part of the 50S ribosomal subunit.

This protein binds to the 23S rRNA, and is important in its secondary structure. It is located near the subunit interface in the base of the L7/L12 stalk, and near the tRNA binding site of the peptidyltransferase center. This chain is Large ribosomal subunit protein uL6, found in Janthinobacterium sp. (strain Marseille) (Minibacterium massiliensis).